The chain runs to 739 residues: NAD(P)H-quinone oxidoreductase subunit 5, chloroplastic (739 aa).

Transmembrane regions (helical) follow at residues 9–29 (WIIPFLPFPVTISIGLGLLLV), 39–59 (IWAFFSVLLLSIAMVFSADLA), 89–109 (IDPLTSIMLILITTVGIMVLI), 125–145 (FAYMSFFNTSMLGLVTSSNLI), 147–167 (IYIFWELVGMCSYLLIGFWFT), 185–205 (GDFGLLLGILGLYWITGSFEF), 224–244 (LFAALCASLLFVGAVAKSAQF), 258–278 (TPISALIHAATMVAAGIFLVA), 280–300 (LLPLFTVIPYIMNFISLIGII), 327–347 (LGYIMLAPGIGSYRAALFHLI), 354–374 (ALLFLGSGSIIHSMEPIVGYS), 396–416 (TTFFLGTLSLCGMPPLACFWS), 425–445 (WLYSPIFAIIAWSTAGLTAFY), 544–564 (LFPMLVLVLFTLFIGFIGIPF), 603–623 (IYSVTISFLGIFLAYIFYGSV), and 716–736 (ISSYIFLYAFSVSICLIIYYF).

This sequence belongs to the complex I subunit 5 family. NDH is composed of at least 16 different subunits, 5 of which are encoded in the nucleus.

The protein resides in the plastid. It localises to the chloroplast thylakoid membrane. It carries out the reaction a plastoquinone + NADH + (n+1) H(+)(in) = a plastoquinol + NAD(+) + n H(+)(out). The catalysed reaction is a plastoquinone + NADPH + (n+1) H(+)(in) = a plastoquinol + NADP(+) + n H(+)(out). Functionally, NDH shuttles electrons from NAD(P)H:plastoquinone, via FMN and iron-sulfur (Fe-S) centers, to quinones in the photosynthetic chain and possibly in a chloroplast respiratory chain. The immediate electron acceptor for the enzyme in this species is believed to be plastoquinone. Couples the redox reaction to proton translocation, and thus conserves the redox energy in a proton gradient. This chain is NAD(P)H-quinone oxidoreductase subunit 5, chloroplastic (ndhF), found in Acorus calamus (Sweet flag).